The following is a 137-amino-acid chain: Small ribosomal subunit protein uS12 (137 aa).

The segment at 1-55 (MPTINQLVRKPRQSKSKKSDSPALNRNFNSKKKKFTDLNSPQKRGVCTRVGTMTP) is disordered. Aspartate 102 is modified (3-methylthioaspartic acid). Positions 118 to 137 (SGVDGRRQGRSLYGTKKPKK) are disordered.

This sequence belongs to the universal ribosomal protein uS12 family. In terms of assembly, part of the 30S ribosomal subunit. Contacts proteins S8 and S17. May interact with IF1 in the 30S initiation complex.

Functionally, with S4 and S5 plays an important role in translational accuracy. In terms of biological role, interacts with and stabilizes bases of the 16S rRNA that are involved in tRNA selection in the A site and with the mRNA backbone. Located at the interface of the 30S and 50S subunits, it traverses the body of the 30S subunit contacting proteins on the other side and probably holding the rRNA structure together. The combined cluster of proteins S8, S12 and S17 appears to hold together the shoulder and platform of the 30S subunit. This Staphylococcus saprophyticus subsp. saprophyticus (strain ATCC 15305 / DSM 20229 / NCIMB 8711 / NCTC 7292 / S-41) protein is Small ribosomal subunit protein uS12.